A 276-amino-acid chain; its full sequence is Large ribosomal subunit protein uL2 (276 aa).

Positions 213–264 (WLGRRPHNRGVVMNPVDHPHGGGEGRTSGGRHPVTPWGKPTKGYKTRTNKRT) are disordered.

It belongs to the universal ribosomal protein uL2 family. Part of the 50S ribosomal subunit. Forms a bridge to the 30S subunit in the 70S ribosome.

In terms of biological role, one of the primary rRNA binding proteins. Required for association of the 30S and 50S subunits to form the 70S ribosome, for tRNA binding and peptide bond formation. It has been suggested to have peptidyltransferase activity; this is somewhat controversial. Makes several contacts with the 16S rRNA in the 70S ribosome. The chain is Large ribosomal subunit protein uL2 from Granulibacter bethesdensis (strain ATCC BAA-1260 / CGDNIH1).